We begin with the raw amino-acid sequence, 388 residues long: Succinate--CoA ligase [ADP-forming] subunit beta (388 aa).

In terms of domain architecture, ATP-grasp spans 9–245 (KELLKSYGLP…KSQENERELK (237 aa)). Residues lysine 46, 53–55 (GRG), glutamate 100, tyrosine 103, and glutamate 108 each bind ATP. Residues asparagine 200 and aspartate 214 each contribute to the Mg(2+) site. Substrate-binding positions include asparagine 265 and 322–324 (GIV).

The protein belongs to the succinate/malate CoA ligase beta subunit family. In terms of assembly, heterotetramer of two alpha and two beta subunits. The cofactor is Mg(2+).

The enzyme catalyses succinate + ATP + CoA = succinyl-CoA + ADP + phosphate. It catalyses the reaction GTP + succinate + CoA = succinyl-CoA + GDP + phosphate. It functions in the pathway carbohydrate metabolism; tricarboxylic acid cycle; succinate from succinyl-CoA (ligase route): step 1/1. Its function is as follows. Succinyl-CoA synthetase functions in the citric acid cycle (TCA), coupling the hydrolysis of succinyl-CoA to the synthesis of either ATP or GTP and thus represents the only step of substrate-level phosphorylation in the TCA. The beta subunit provides nucleotide specificity of the enzyme and binds the substrate succinate, while the binding sites for coenzyme A and phosphate are found in the alpha subunit. The sequence is that of Succinate--CoA ligase [ADP-forming] subunit beta from Psychrobacter cryohalolentis (strain ATCC BAA-1226 / DSM 17306 / VKM B-2378 / K5).